Consider the following 197-residue polypeptide: UPF0301 protein Adeh_3962 (197 aa).

Belongs to the UPF0301 (AlgH) family.

This chain is UPF0301 protein Adeh_3962, found in Anaeromyxobacter dehalogenans (strain 2CP-C).